Reading from the N-terminus, the 549-residue chain is Probable protein kinase UbiB (549 aa).

The Protein kinase domain occupies 123–501 (DFNEIPLASA…QQQAHKSNYL (379 aa)). ATP is bound by residues 129–137 (LASASISQV) and Lys152. Asp287 (proton acceptor) is an active-site residue. 2 consecutive transmembrane segments (helical) span residues 496–516 (HKSNYLLITSAVLLICGTLLI) and 520–540 (ATLWTPYVCLVSGIILWFVGW).

This sequence belongs to the ABC1 family. UbiB subfamily.

The protein localises to the cell inner membrane. Its pathway is cofactor biosynthesis; ubiquinone biosynthesis [regulation]. In terms of biological role, is probably a protein kinase regulator of UbiI activity which is involved in aerobic coenzyme Q (ubiquinone) biosynthesis. The polypeptide is Probable protein kinase UbiB (Shewanella baltica (strain OS223)).